A 328-amino-acid chain; its full sequence is 4-hydroxy-3-methylbut-2-enyl diphosphate reductase (328 aa).

Cys24 contacts [4Fe-4S] cluster. (2E)-4-hydroxy-3-methylbut-2-enyl diphosphate-binding residues include His55 and His88. Residues His55 and His88 each coordinate dimethylallyl diphosphate. 2 residues coordinate isopentenyl diphosphate: His55 and His88. Cys110 lines the [4Fe-4S] cluster pocket. His138 contributes to the (2E)-4-hydroxy-3-methylbut-2-enyl diphosphate binding site. His138 provides a ligand contact to dimethylallyl diphosphate. His138 is an isopentenyl diphosphate binding site. Catalysis depends on Glu140, which acts as the Proton donor. Residue Thr178 participates in (2E)-4-hydroxy-3-methylbut-2-enyl diphosphate binding. Residue Cys208 participates in [4Fe-4S] cluster binding. (2E)-4-hydroxy-3-methylbut-2-enyl diphosphate-binding residues include Ser236, Ser237, Asn238, and Ser279. The dimethylallyl diphosphate site is built by Ser236, Ser237, Asn238, and Ser279. Isopentenyl diphosphate is bound by residues Ser236, Ser237, Asn238, and Ser279.

It belongs to the IspH family. [4Fe-4S] cluster is required as a cofactor.

It catalyses the reaction isopentenyl diphosphate + 2 oxidized [2Fe-2S]-[ferredoxin] + H2O = (2E)-4-hydroxy-3-methylbut-2-enyl diphosphate + 2 reduced [2Fe-2S]-[ferredoxin] + 2 H(+). It carries out the reaction dimethylallyl diphosphate + 2 oxidized [2Fe-2S]-[ferredoxin] + H2O = (2E)-4-hydroxy-3-methylbut-2-enyl diphosphate + 2 reduced [2Fe-2S]-[ferredoxin] + 2 H(+). It participates in isoprenoid biosynthesis; dimethylallyl diphosphate biosynthesis; dimethylallyl diphosphate from (2E)-4-hydroxy-3-methylbutenyl diphosphate: step 1/1. The protein operates within isoprenoid biosynthesis; isopentenyl diphosphate biosynthesis via DXP pathway; isopentenyl diphosphate from 1-deoxy-D-xylulose 5-phosphate: step 6/6. Catalyzes the conversion of 1-hydroxy-2-methyl-2-(E)-butenyl 4-diphosphate (HMBPP) into a mixture of isopentenyl diphosphate (IPP) and dimethylallyl diphosphate (DMAPP). Acts in the terminal step of the DOXP/MEP pathway for isoprenoid precursor biosynthesis. The polypeptide is 4-hydroxy-3-methylbut-2-enyl diphosphate reductase (Ehrlichia ruminantium (strain Gardel)).